The primary structure comprises 1441 residues: Histone-lysine N-methyltransferase SETD5 (1441 aa).

The segment at 1-28 is disordered; sequence MSIAIPLGVTTPDTSYSDMAAGSDPESV. Phosphothreonine is present on Leu70. A phosphoserine mark is found at Ser72 and Val74. The interval 156–202 is disordered; that stretch reads TPTSITLTVRRTKPKKRKKSPEKGRAAPKTKKIKNSPSEAQNLDENT. A compositionally biased stretch (basic residues) spans 165-189; that stretch reads RRTKPKKRKKSPEKGRAAPKTKKIK. Over residues 190 to 202 the composition is skewed to polar residues; sequence NSPSEAQNLDENT. Residues 269-390 enclose the SET domain; the sequence is MQLQLGRVTR…KDAEVTIAFD (122 aa). Disordered stretches follow at residues 417-683 and 793-816; these read NPNA…TVIS and MTQT…ETSN. Composition is skewed to acidic residues over residues 450–461 and 479–501; these read LEQQNEVPEENP and EEVD…DDQE. Composition is skewed to low complexity over residues 539–552 and 561–572; these read SSSD…SSEI and AAPESEVSSPVS. Residues 575–588 are compositionally biased toward polar residues; the sequence is AIPSTPQSTGVNTR. Positions 611-621 are enriched in basic residues; it reads SRPRPKSRISR. Residues 635-650 show a composition bias toward low complexity; the sequence is QAIAQQAELSQAALEE. Positions 652-683 are enriched in polar residues; the sequence is GSNNSVTPPEAGNTDSSGENRQLTGSDPTVIS. Ser829 and Ser852 each carry phosphoserine. Disordered regions lie at residues 849–883, 1036–1228, and 1243–1441; these read QPLS…ECRN, DLSR…SKGA, and CDSP…TGLS. Thr855 is modified (phosphothreonine). Residues 1062–1076 show a composition bias toward basic residues; the sequence is QRKKVSLLEYRKRKQ. A compositionally biased stretch (low complexity) spans 1087–1107; that stretch reads DSSQSKSKSSGAGQGSSNSVS. The segment covering 1144–1163 has biased composition (polar residues); that stretch reads PSDSRGTSSSHCRPQENISS. Ser1197 carries the post-translational modification Phosphoserine. Residues 1250 to 1259 show a composition bias toward low complexity; the sequence is SQSLLQQSSS. Residues 1265 to 1275 are compositionally biased toward polar residues; it reads PTQSPGYSYRT. Residues 1284-1300 show a composition bias toward low complexity; sequence PSHGSSESSLSSTSYPS. A compositionally biased stretch (polar residues) spans 1319–1333; sequence YYSSQPHSGNSTGSN. Positions 1335–1372 are enriched in low complexity; that stretch reads PRRSCSSSAASPTPQGPSDSPTSDSVSQSSTGTLSSTS. Polar residues-rich tracts occupy residues 1373 to 1382, 1389 to 1412, and 1429 to 1441; these read FPQNSRSSLP, SLPN…NSQH, and LQGS…TGLS.

Interacts with components of the PAF1 complex (PAF1C) such as LEO1, CTR9 and CDC73. Interacts with NCOR1. Interacts with HDAC3. In terms of tissue distribution, ubiquitously expressed.

It localises to the nucleus. Its subcellular location is the chromosome. The enzyme catalyses L-lysyl(9)-[histone H3] + S-adenosyl-L-methionine = N(6)-methyl-L-lysyl(9)-[histone H3] + S-adenosyl-L-homocysteine + H(+). The catalysed reaction is L-lysyl(36)-[histone H3] + 3 S-adenosyl-L-methionine = N(6),N(6),N(6)-trimethyl-L-lysyl(36)-[histone H3] + 3 S-adenosyl-L-homocysteine + 3 H(+). Chromatin regulator required for brain development: acts as a regulator of RNA elongation rate, thereby regulating neural stem cell (NSC) proliferation and synaptic transmission. May act by mediating trimethylation of 'Lys-36' of histone H3 (H3K36me3), which is essential to allow on-time RNA elongation dynamics. Also monomethylates 'Lys-9' of histone H3 (H3K9me1) in vitro. The relevance of histone methyltransferase activity is however subject to discussion. The protein is Histone-lysine N-methyltransferase SETD5 of Mus musculus (Mouse).